Reading from the N-terminus, the 689-residue chain is Glycine--tRNA ligase beta subunit (689 aa).

The protein belongs to the class-II aminoacyl-tRNA synthetase family. Tetramer of two alpha and two beta subunits.

The protein localises to the cytoplasm. It carries out the reaction tRNA(Gly) + glycine + ATP = glycyl-tRNA(Gly) + AMP + diphosphate. The sequence is that of Glycine--tRNA ligase beta subunit from Salmonella agona (strain SL483).